The sequence spans 895 residues: uncharacterized protein (895 aa).

2 to 19 (NISVIGTGYVGLIQAVGL) is an NAD(+) binding site. Cys261 is a catalytic residue. In terms of domain architecture, DOD-type homing endonuclease spans 468 to 614 (LIGYYLSEGW…LLILLQLLGI (147 aa)).

Belongs to the UDP-glucose/GDP-mannose dehydrogenase family. In terms of processing, this protein undergoes a protein self splicing that involves a post-translational excision of the intervening region (intein) followed by peptide ligation.

This is an uncharacterized protein from Methanocaldococcus jannaschii (strain ATCC 43067 / DSM 2661 / JAL-1 / JCM 10045 / NBRC 100440) (Methanococcus jannaschii).